A 117-amino-acid polypeptide reads, in one-letter code: Large ribosomal subunit protein uL18 (117 aa).

This sequence belongs to the universal ribosomal protein uL18 family. In terms of assembly, part of the 50S ribosomal subunit; part of the 5S rRNA/L5/L18/L25 subcomplex. Contacts the 5S and 23S rRNAs.

This is one of the proteins that bind and probably mediate the attachment of the 5S RNA into the large ribosomal subunit, where it forms part of the central protuberance. This is Large ribosomal subunit protein uL18 from Nitrosococcus oceani (strain ATCC 19707 / BCRC 17464 / JCM 30415 / NCIMB 11848 / C-107).